Reading from the N-terminus, the 258-residue chain is Acetylglutamate kinase (258 aa).

Residues 44 to 45 (GG), Arg66, and Asn158 each bind substrate. Residues 181-186 (DVSGIL) and 209-211 (IIT) contribute to the ATP site.

This sequence belongs to the acetylglutamate kinase family. ArgB subfamily. Homodimer.

It is found in the cytoplasm. The enzyme catalyses N-acetyl-L-glutamate + ATP = N-acetyl-L-glutamyl 5-phosphate + ADP. It participates in amino-acid biosynthesis; L-arginine biosynthesis; N(2)-acetyl-L-ornithine from L-glutamate: step 2/4. Its function is as follows. Catalyzes the ATP-dependent phosphorylation of N-acetyl-L-glutamate. This chain is Acetylglutamate kinase, found in Klebsiella pneumoniae subsp. pneumoniae (strain ATCC 700721 / MGH 78578).